Reading from the N-terminus, the 973-residue chain is RNA-directed RNA polymerase (973 aa).

Residues 96-264 (HTHGRAAKFR…RRIIFLEPAA (169 aa)) form a capping region. The RdRp catalytic domain maps to 558–683 (HGTLESDYSR…AHENGLEPAL (126 aa)). The active-site For RdRp/TNTase activity is the Asp-669. The segment at 853–973 (VVGPGPRVET…TTTAVVHASA (121 aa)) is disordered. Basic and acidic residues predominate over residues 882–891 (GHSERRDKSS). 2 stretches are compositionally biased toward low complexity: residues 924–935 (GSGNRRGPTNGR) and 955–973 (PPVS…HASA).

This sequence belongs to the nodaviridae RNA polymerase family. In terms of assembly, homododecamer. Forms 2 stacked rings of 35-nm in diameter, arranged in a crown-like structure at the opening of virus-induced replication vesicles. Interacts with protein B2. The cofactor is Mn(2+).

It localises to the host mitochondrion outer membrane. The catalysed reaction is RNA(n) + a ribonucleoside 5'-triphosphate = RNA(n+1) + diphosphate. RNA-dependent RNA polymerase, which replicates the viral genome composed of 2 RNA segments, RNA1 and RNA2. Does not need an exogenous primer. Also possesses a terminal nucleotidyl transferase (TNTase) activity. The TNTase catalyzes the addition of nucleotide to the 3'-end of plus- and minus-stranded RNAs, probably to repair the 3'-end nucleotide loss. Forms the open necked connection to the cytosol of the virus-induced replication vesicles. Mediates viral RNA1 recruitment. The chain is RNA-directed RNA polymerase from Spodoptera eridania (Southern armyworm).